The chain runs to 205 residues: Outer-membrane lipoprotein carrier protein (205 aa).

Residues 1–21 (MRFLAVATMVVALMVPWSVRA) form the signal peptide.

It belongs to the LolA family. As to quaternary structure, monomer.

The protein localises to the periplasm. Its function is as follows. Participates in the translocation of lipoproteins from the inner membrane to the outer membrane. Only forms a complex with a lipoprotein if the residue after the N-terminal Cys is not an aspartate (The Asp acts as a targeting signal to indicate that the lipoprotein should stay in the inner membrane). The chain is Outer-membrane lipoprotein carrier protein from Methylobacillus flagellatus (strain ATCC 51484 / DSM 6875 / VKM B-1610 / KT).